The chain runs to 514 residues: MPPLALLSTSDKTGVVEFARSLVNEFGFQLISSGGTAKALIAAGLPVTKVADYTGSPEILGGRVKTLHPRIHGGILARRDLPTDLQDLAATGIEPIDLVVVNLYPFEQTIAQPDMTLSDAIEQIDIGGPALLRASAKNFAHVTVLCSPEQYGPCLAELRQQQGQTSLIFRQSCAQKAFWHTATYDQAIATYLTSSDPTEISLPPRLSVTATQFQSLRYGENPHQAAAWYRTGTATGGWSGATQLQGKELSYNNLVDLEAARAIVAEFTEQPAAVITKHTNPCGVAEGDSLVEAYRRAFQADSTSAFGGIVALNHPLDGETAKAMTETFLECIVAPGCEPEAEAILKTKSNLRVLVLPDLSQGASLEIKAIAGGFLVQQPDRQPIQPQSWEVVSQTKPTEEQWQELIFAWKVAKHVKSNAIVVTADRVTLGVGAGQMNRVGSVQIALTQAGEKAQGAVLASDGFFPFDDSVRAAAAAGIGAIVQPGGSKRDADSIQAADQLGLVMVFTHTRHFLH.

Residues 1 to 146 (MPPLALLSTS…KNFAHVTVLC (146 aa)) form the MGS-like domain.

Belongs to the PurH family.

It carries out the reaction (6R)-10-formyltetrahydrofolate + 5-amino-1-(5-phospho-beta-D-ribosyl)imidazole-4-carboxamide = 5-formamido-1-(5-phospho-D-ribosyl)imidazole-4-carboxamide + (6S)-5,6,7,8-tetrahydrofolate. It catalyses the reaction IMP + H2O = 5-formamido-1-(5-phospho-D-ribosyl)imidazole-4-carboxamide. Its pathway is purine metabolism; IMP biosynthesis via de novo pathway; 5-formamido-1-(5-phospho-D-ribosyl)imidazole-4-carboxamide from 5-amino-1-(5-phospho-D-ribosyl)imidazole-4-carboxamide (10-formyl THF route): step 1/1. It functions in the pathway purine metabolism; IMP biosynthesis via de novo pathway; IMP from 5-formamido-1-(5-phospho-D-ribosyl)imidazole-4-carboxamide: step 1/1. The sequence is that of Bifunctional purine biosynthesis protein PurH from Cyanothece sp. (strain PCC 7425 / ATCC 29141).